Here is a 564-residue protein sequence, read N- to C-terminus: Bicarbonate transporter BicA (564 aa).

Residues 1–11 (MQITNKIHFRN) are Cytoplasmic-facing. The helical transmembrane segment at 12–37 (LQGDLFGGVTAAVIALPMALAFGIAS) threads the bilayer. Topologically, residues 38 to 40 (GAG) are periplasmic. The helical transmembrane segment at 41-58 (ATAGLWGAVIVGFFAALF) threads the bilayer. Residues 59–70 (GGTPTLISEPTG) are Cytoplasmic-facing. Thr-69 is a hydrogencarbonate binding site. A helical membrane pass occupies residues 71–86 (PMTVVQTAVIASLVAA). Residues 87–90 (DPDN) are Periplasmic-facing. A helical transmembrane segment spans residues 91-112 (GLAMAFTVVMMAGLFQIAFGLL). The Cytoplasmic segment spans residues 113-122 (KLGKYVTMMP). Residues 123–145 (YTVISGFMSGIGIILVILQLAPF) form a helical membrane-spanning segment. Residues 146-170 (LGQASPKGGVIGTLQALPNLVSNVR) are Periplasmic-facing. A helical membrane pass occupies residues 171–185 (PVETLLALMTVGIIW). At 186–196 (FMPSRWKKFAP) the chain is on the cytoplasmic side. A helical transmembrane segment spans residues 197-211 (PQLVALVLGTIISIT). Over 212–240 (LFGDLDIRRIGEIQAGLPALQLPVFQADQ) the chain is Periplasmic. A helical transmembrane segment spans residues 241-269 (LQRMLIDAAVLGMLGCIDALLTSVVADSL). Asp-258 and Thr-262 together coordinate Na(+). Residues 270–275 (TRTEHN) are Cytoplasmic-facing. The helical transmembrane segment at 276–292 (SNKELVGQGIGNVMSGL) threads the bilayer. The Periplasmic portion of the chain corresponds to 293–302 (FGGLGGAGAT). Na(+) is bound at residue Gly-300. Residue Ala-301 coordinates hydrogencarbonate. Thr-302 serves as a coordination point for Na(+). Residues 303–312 (MGTVVNIQSG) form a helical membrane-spanning segment. Topologically, residues 313–315 (GRT) are cytoplasmic. A helical membrane pass occupies residues 316–338 (ALSGLIRAMVLLVVILGAAKLAA). Residues 339–341 (TIP) lie on the Periplasmic side of the membrane. The helical transmembrane segment at 342–357 (LAVLAGIAFKVGVDII) threads the bilayer. Topologically, residues 358 to 369 (DWGFLKRAHHVS) are cytoplasmic. A helical membrane pass occupies residues 370 to 390 (IKGALIMYAVIVLTVLVDLIA). Residues 391 to 392 (AV) lie on the Periplasmic side of the membrane. The chain crosses the membrane as a helical span at residues 393–405 (GIGVFIANILTID). At 406-564 (RMSALQSKAV…PSSSSVQTTY (159 aa)) the chain is on the cytoplasmic side. An STAS domain is found at 432-542 (KRWLDEGNGR…DDRSEALKDA (111 aa)).

The protein belongs to the SLC26A/SulP transporter (TC 2.A.53) family. As to quaternary structure, forms homodimers through the STAS cytoplasmic domain.

The protein resides in the cell inner membrane. In terms of biological role, low affinity, high-flux Na(+)-dependent bicarbonate transporter. Involved in carbone dioxide-concentrating mechanisms (CCMs) that accumulate CO(2) and improve photosynthetic carbon fixation. The sequence is that of Bicarbonate transporter BicA from Synechocystis sp. (strain ATCC 27184 / PCC 6803 / Kazusa).